The sequence spans 155 residues: cAMP-dependent protein kinase type II-alpha regulatory subunit (155 aa).

The segment at 1 to 34 (SGSQDLEPSSGLVTDAIADSESEDDEDLDVPIPS) is disordered. Residues 1–81 (SGSQDLEPSS…LQEACKDILL (81 aa)) form a dimerization and phosphorylation region. Residues 18–29 (ADSESEDDEDLD) are compositionally biased toward acidic residues. S20 and S22 each carry phosphoserine. S41 carries the post-translational modification Phosphoserine; by PKA. Residues 82 to 155 (FKNL…ALMY) and E150 contribute to the 3',5'-cyclic AMP site.

It belongs to the cAMP-dependent kinase regulatory chain family. The inactive form of the enzyme is composed of two regulatory chains and two catalytic chains. Activation by cAMP produces two active catalytic monomers and a regulatory dimer that binds four cAMP molecules. Interacts with AKAP4 and CBFA2T3. Interacts with the phosphorylated form of PJA2. Interacts with MYRIP; this interaction may link PKA to components of the exocytosis machinery, thus facilitating exocytosis, including insulin release. Forms a complex composed of PRKAR2A, GSK3B and GSKIP through GSKIP interaction; facilitates PKA-induced phosphorylation and regulates GSK3B activity. Interacts with ADCY8; inhibits adenylate cyclase activity through PKA phosphorylation. Phosphorylated by the activated catalytic chain. In terms of tissue distribution, four types of regulatory chains are found: I-alpha, I-beta, II-alpha, and II-beta. Their expression varies among tissues and is in some cases constitutive and in others inducible.

It is found in the cytoplasm. Its subcellular location is the cell membrane. In terms of biological role, regulatory subunit of the cAMP-dependent protein kinases involved in cAMP signaling in cells. Type II regulatory chains mediate membrane association by binding to anchoring proteins, including the MAP2 kinase. The protein is cAMP-dependent protein kinase type II-alpha regulatory subunit (PRKAR2A) of Sus scrofa (Pig).